The sequence spans 264 residues: Thymidylate synthase (264 aa).

Arg21 is a dUMP binding site. His51 contributes to the (6R)-5,10-methylene-5,6,7,8-tetrahydrofolate binding site. 126–127 (RR) contributes to the dUMP binding site. The active-site Nucleophile is the Cys146. Residues 166–169 (RSAD), Asn177, and 207–209 (HIY) contribute to the dUMP site. Asp169 provides a ligand contact to (6R)-5,10-methylene-5,6,7,8-tetrahydrofolate. Residue Ala263 coordinates (6R)-5,10-methylene-5,6,7,8-tetrahydrofolate.

The protein belongs to the thymidylate synthase family. Bacterial-type ThyA subfamily. In terms of assembly, homodimer.

The protein localises to the cytoplasm. The enzyme catalyses dUMP + (6R)-5,10-methylene-5,6,7,8-tetrahydrofolate = 7,8-dihydrofolate + dTMP. It participates in pyrimidine metabolism; dTTP biosynthesis. Functionally, catalyzes the reductive methylation of 2'-deoxyuridine-5'-monophosphate (dUMP) to 2'-deoxythymidine-5'-monophosphate (dTMP) while utilizing 5,10-methylenetetrahydrofolate (mTHF) as the methyl donor and reductant in the reaction, yielding dihydrofolate (DHF) as a by-product. This enzymatic reaction provides an intracellular de novo source of dTMP, an essential precursor for DNA biosynthesis. The protein is Thymidylate synthase of Cupriavidus metallidurans (strain ATCC 43123 / DSM 2839 / NBRC 102507 / CH34) (Ralstonia metallidurans).